The sequence spans 102 residues: Glutaredoxin 1 (102 aa).

Residues 1–96 (MNKAILHTII…KLLEGQPKKK (96 aa)) form the Glutaredoxin domain. Cysteines 17 and 20 form a disulfide.

This sequence belongs to the glutaredoxin family. Monomer.

Its subcellular location is the cytoplasm. Its function is as follows. Has a glutathione-disulfide oxidoreductase activity in the presence of NADPH and glutathione reductase. Reduces low molecular weight disulfides and proteins. The polypeptide is Glutaredoxin 1 (grxC1) (Rickettsia felis (strain ATCC VR-1525 / URRWXCal2) (Rickettsia azadi)).